A 149-amino-acid chain; its full sequence is Calmodulin (149 aa).

Residue A2 is modified to N-acetylalanine. EF-hand domains lie at 8-43, 44-79, 81-116, and 117-149; these read DQIS…LGQN, PTEA…KMKD, DSEE…LGEK, and LTDE…MMAK. Ca(2+)-binding residues include D21, D23, D25, C27, E32, D57, D59, N61, T63, E68, D94, D96, N98, and E105. K116 is modified (N6,N6,N6-trimethyllysine). D130, D132, D134, Q136, and E141 together coordinate Ca(2+).

This sequence belongs to the calmodulin family.

Its function is as follows. Calmodulin mediates the control of a large number of enzymes, ion channels and other proteins by Ca(2+). Among the enzymes to be stimulated by the calmodulin-Ca(2+) complex are a number of protein kinases and phosphatases. This is Calmodulin (CCM1) from Capsicum annuum (Capsicum pepper).